We begin with the raw amino-acid sequence, 89 residues long: Large ribosomal subunit protein bL27 (89 aa).

The interval methionine 1–lysine 24 is disordered.

This sequence belongs to the bacterial ribosomal protein bL27 family.

The sequence is that of Large ribosomal subunit protein bL27 from Azorhizobium caulinodans (strain ATCC 43989 / DSM 5975 / JCM 20966 / LMG 6465 / NBRC 14845 / NCIMB 13405 / ORS 571).